Reading from the N-terminus, the 498-residue chain is Glycerol kinase (498 aa).

ADP is bound at residue T12. Residues T12, T13, and S14 each contribute to the ATP site. Position 12 (T12) interacts with sn-glycerol 3-phosphate. R16 serves as a coordination point for ADP. Sn-glycerol 3-phosphate-binding residues include R82, E83, Y134, and D243. Glycerol is bound by residues R82, E83, Y134, D243, and Q244. Positions 265 and 308 each coordinate ADP. ATP contacts are provided by T265, G308, Q312, and G409. Residues G409 and N413 each coordinate ADP.

This sequence belongs to the FGGY kinase family. As to quaternary structure, homotetramer and homodimer (in equilibrium).

The enzyme catalyses glycerol + ATP = sn-glycerol 3-phosphate + ADP + H(+). The protein operates within polyol metabolism; glycerol degradation via glycerol kinase pathway; sn-glycerol 3-phosphate from glycerol: step 1/1. Its activity is regulated as follows. Activated by phosphorylation and inhibited by fructose 1,6-bisphosphate (FBP). Key enzyme in the regulation of glycerol uptake and metabolism. Catalyzes the phosphorylation of glycerol to yield sn-glycerol 3-phosphate. This chain is Glycerol kinase, found in Clostridium botulinum (strain 657 / Type Ba4).